A 163-amino-acid polypeptide reads, in one-letter code: Nucleotide-binding protein APL_1231 (163 aa).

The protein belongs to the YajQ family.

In terms of biological role, nucleotide-binding protein. This is Nucleotide-binding protein APL_1231 from Actinobacillus pleuropneumoniae serotype 5b (strain L20).